The chain runs to 329 residues: Methionyl-tRNA formyltransferase (329 aa).

117 to 120 provides a ligand contact to (6S)-5,6,7,8-tetrahydrofolate; that stretch reads SLLP.

The protein belongs to the Fmt family.

The catalysed reaction is L-methionyl-tRNA(fMet) + (6R)-10-formyltetrahydrofolate = N-formyl-L-methionyl-tRNA(fMet) + (6S)-5,6,7,8-tetrahydrofolate + H(+). In terms of biological role, attaches a formyl group to the free amino group of methionyl-tRNA(fMet). The formyl group appears to play a dual role in the initiator identity of N-formylmethionyl-tRNA by promoting its recognition by IF2 and preventing the misappropriation of this tRNA by the elongation apparatus. The polypeptide is Methionyl-tRNA formyltransferase (Paracidovorax citrulli (strain AAC00-1) (Acidovorax citrulli)).